Consider the following 256-residue polypeptide: MTFLAIDVGNTRLKWALYDAPRAGAALRAHGVEFLDHIDRLAEGSWARLPPPGHMLGCVVAGDAVKRRVQEQMEIWDVTPSWVVASAQEAGLSNGYDHPSRLGADRWVAMIGARQHVLARGPARPLVLVMVGTAVTVECVDAQGRFIGGLILPGHGIMLRALESGTAGLHVPTGEVRLFPTNTSDALTSGGTYAIAGAVERMVQHVIAHCGTEPICLMTGGAGWKVAPSMTRPFELLENLIFDGLLEIAMRRLAAA.

Residue 7–14 (DVGNTRLK) coordinates ATP. Residues Tyr96 and 103–106 (GADR) each bind substrate. The active-site Proton acceptor is the Asp105. Thr133 lines the ATP pocket. Thr183 contributes to the substrate binding site.

The protein belongs to the type III pantothenate kinase family. As to quaternary structure, homodimer. NH4(+) is required as a cofactor. It depends on K(+) as a cofactor.

The protein resides in the cytoplasm. The catalysed reaction is (R)-pantothenate + ATP = (R)-4'-phosphopantothenate + ADP + H(+). It functions in the pathway cofactor biosynthesis; coenzyme A biosynthesis; CoA from (R)-pantothenate: step 1/5. Its function is as follows. Catalyzes the phosphorylation of pantothenate (Pan), the first step in CoA biosynthesis. This Verminephrobacter eiseniae (strain EF01-2) protein is Type III pantothenate kinase.